A 184-amino-acid chain; its full sequence is Photosystem I assembly protein Ycf4 (184 aa).

2 consecutive transmembrane segments (helical) span residues 20 to 40 and 64 to 84; these read GNFF…VVGI and IVMS…WCTI.

This sequence belongs to the Ycf4 family.

It localises to the plastid. It is found in the chloroplast thylakoid membrane. In terms of biological role, seems to be required for the assembly of the photosystem I complex. The protein is Photosystem I assembly protein Ycf4 of Citrus sinensis (Sweet orange).